Consider the following 625-residue polypeptide: DNA-directed RNA polymerase subunit gamma (625 aa).

Positions 71, 73, 86, and 89 each coordinate Zn(2+). Positions 467, 469, and 471 each coordinate Mg(2+).

Belongs to the RNA polymerase beta' chain family. RpoC1 subfamily. In terms of assembly, in cyanobacteria the RNAP catalytic core is composed of 2 alpha, 1 beta, 1 beta', 1 gamma and 1 omega subunit. When a sigma factor is associated with the core the holoenzyme is formed, which can initiate transcription. Requires Mg(2+) as cofactor. Zn(2+) is required as a cofactor.

It catalyses the reaction RNA(n) + a ribonucleoside 5'-triphosphate = RNA(n+1) + diphosphate. In terms of biological role, DNA-dependent RNA polymerase catalyzes the transcription of DNA into RNA using the four ribonucleoside triphosphates as substrates. The polypeptide is DNA-directed RNA polymerase subunit gamma (Rippkaea orientalis (strain PCC 8801 / RF-1) (Cyanothece sp. (strain PCC 8801))).